The chain runs to 499 residues: uncharacterized protein (499 aa).

A run of 12 helical transmembrane segments spans residues 51-71, 98-118, 127-147, 155-175, 187-207, 220-240, 301-321, 325-345, 352-372, 378-398, 412-432, and 444-464; these read LLFR…LVAF, IIAS…TLLM, LAFI…CHNF, LVLG…LTMI, YLFA…YAVL, WLFI…YFII, CLYG…YTSL, YMTI…SFLS, GIIL…LLAC, VLYF…GLNV, ATAI…AGQI, and LTSL…IFFL.

The protein belongs to the major facilitator superfamily. Allantoate permease family.

It is found in the golgi apparatus. It localises to the membrane. This is an uncharacterized protein from Schizosaccharomyces pombe (strain 972 / ATCC 24843) (Fission yeast).